The following is a 296-amino-acid chain: Ribose import binding protein RbsB (296 aa).

A signal peptide spans 1–25 (MNMKKLATLVSAVALSATVSANAMA).

Belongs to the bacterial solute-binding protein 2 family. As to quaternary structure, the complex is composed of an ATP-binding protein (RbsA), two transmembrane proteins (RbsC) and a solute-binding protein (RbsB).

Its subcellular location is the periplasm. Part of the ABC transporter complex RbsABC involved in ribose import. Binds ribose. The chain is Ribose import binding protein RbsB (rbsB) from Salmonella typhi.